The sequence spans 55 residues: ATP synthase F(0) complex subunit 8 (55 aa).

Residues 9-29 (WFFIMIMSWAVFLLLIQPKLL) form a helical membrane-spanning segment.

Belongs to the ATPase protein 8 family. As to quaternary structure, component of the ATP synthase complex composed at least of ATP5F1A/subunit alpha, ATP5F1B/subunit beta, ATP5MC1/subunit c (homooctomer), MT-ATP6/subunit a, MT-ATP8/subunit 8, ATP5ME/subunit e, ATP5MF/subunit f, ATP5MG/subunit g, ATP5MK/subunit k, ATP5MJ/subunit j, ATP5F1C/subunit gamma, ATP5F1D/subunit delta, ATP5F1E/subunit epsilon, ATP5PF/subunit F6, ATP5PB/subunit b, ATP5PD/subunit d, ATP5PO/subunit OSCP. ATP synthase complex consists of a soluble F(1) head domain (subunits alpha(3) and beta(3)) - the catalytic core - and a membrane F(0) domain - the membrane proton channel (subunits c, a, 8, e, f, g, k and j). These two domains are linked by a central stalk (subunits gamma, delta, and epsilon) rotating inside the F1 region and a stationary peripheral stalk (subunits F6, b, d, and OSCP).

It localises to the mitochondrion membrane. Its function is as follows. Subunit 8, of the mitochondrial membrane ATP synthase complex (F(1)F(0) ATP synthase or Complex V) that produces ATP from ADP in the presence of a proton gradient across the membrane which is generated by electron transport complexes of the respiratory chain. ATP synthase complex consist of a soluble F(1) head domain - the catalytic core - and a membrane F(1) domain - the membrane proton channel. These two domains are linked by a central stalk rotating inside the F(1) region and a stationary peripheral stalk. During catalysis, ATP synthesis in the catalytic domain of F(1) is coupled via a rotary mechanism of the central stalk subunits to proton translocation. In vivo, can only synthesize ATP although its ATP hydrolase activity can be activated artificially in vitro. Part of the complex F(0) domain. The chain is ATP synthase F(0) complex subunit 8 from Rhea americana (Greater rhea).